Consider the following 223-residue polypeptide: Ribose-5-phosphate isomerase A (223 aa).

Residues 29–32 (TGST), 82–85 (DGAD), and 95–98 (KGGG) each bind substrate. Glutamate 104 functions as the Proton acceptor in the catalytic mechanism. Position 122 (lysine 122) interacts with substrate.

This sequence belongs to the ribose 5-phosphate isomerase family. Homodimer.

The enzyme catalyses aldehydo-D-ribose 5-phosphate = D-ribulose 5-phosphate. The protein operates within carbohydrate degradation; pentose phosphate pathway; D-ribose 5-phosphate from D-ribulose 5-phosphate (non-oxidative stage): step 1/1. Its function is as follows. Catalyzes the reversible conversion of ribose-5-phosphate to ribulose 5-phosphate. The polypeptide is Ribose-5-phosphate isomerase A (Neisseria gonorrhoeae (strain ATCC 700825 / FA 1090)).